A 277-amino-acid chain; its full sequence is Large ribosomal subunit protein uL2 (277 aa).

Disordered stretches follow at residues 32 to 58 (KSLTKGKVSRAGRDSSGRISVRRRGGG) and 225 to 277 (VAMN…RRNN).

This sequence belongs to the universal ribosomal protein uL2 family. Part of the 50S ribosomal subunit. Forms a bridge to the 30S subunit in the 70S ribosome.

One of the primary rRNA binding proteins. Required for association of the 30S and 50S subunits to form the 70S ribosome, for tRNA binding and peptide bond formation. It has been suggested to have peptidyltransferase activity; this is somewhat controversial. Makes several contacts with the 16S rRNA in the 70S ribosome. This is Large ribosomal subunit protein uL2 from Borrelia recurrentis (strain A1).